We begin with the raw amino-acid sequence, 336 residues long: Ornithine carbamoyltransferase, catabolic (336 aa).

Carbamoyl phosphate-binding positions include S57–T60, Q84, R108, and H135–Q138. Residues N168, D232, and S236–M237 each bind L-ornithine. Carbamoyl phosphate contacts are provided by residues C274 to L275 and R321.

It belongs to the aspartate/ornithine carbamoyltransferase superfamily. OTCase family.

It localises to the cytoplasm. It catalyses the reaction carbamoyl phosphate + L-ornithine = L-citrulline + phosphate + H(+). The protein operates within amino-acid degradation; L-arginine degradation via ADI pathway; carbamoyl phosphate from L-arginine: step 2/2. Functionally, reversibly catalyzes the transfer of the carbamoyl group from carbamoyl phosphate (CP) to the N(epsilon) atom of ornithine (ORN) to produce L-citrulline. The polypeptide is Ornithine carbamoyltransferase, catabolic (Burkholderia pseudomallei (strain K96243)).